The following is a 366-amino-acid chain: Alanine racemase (366 aa).

Lysine 33 acts as the Proton acceptor; specific for D-alanine in catalysis. The residue at position 33 (lysine 33) is an N6-(pyridoxal phosphate)lysine. A substrate-binding site is contributed by arginine 129. The active-site Proton acceptor; specific for L-alanine is tyrosine 253. Residue methionine 301 coordinates substrate.

This sequence belongs to the alanine racemase family. Requires pyridoxal 5'-phosphate as cofactor.

It carries out the reaction L-alanine = D-alanine. Its pathway is amino-acid biosynthesis; D-alanine biosynthesis; D-alanine from L-alanine: step 1/1. Functionally, catalyzes the interconversion of L-alanine and D-alanine. May also act on other amino acids. In Xanthomonas axonopodis pv. citri (strain 306), this protein is Alanine racemase (alr).